The chain runs to 303 residues: 2-(5''-triphosphoribosyl)-3'-dephosphocoenzyme-A synthase (303 aa).

Belongs to the CitG/MdcB family.

The catalysed reaction is 3'-dephospho-CoA + ATP = 2'-(5''-triphospho-alpha-D-ribosyl)-3'-dephospho-CoA + adenine. Its function is as follows. Catalyzes the formation of 2-(5''-triphosphoribosyl)-3'-dephosphocoenzyme-A, the precursor of the prosthetic group of the holo-acyl carrier protein (gamma chain) of citrate lyase, from ATP and dephospho-CoA. The protein is 2-(5''-triphosphoribosyl)-3'-dephosphocoenzyme-A synthase of Escherichia fergusonii (strain ATCC 35469 / DSM 13698 / CCUG 18766 / IAM 14443 / JCM 21226 / LMG 7866 / NBRC 102419 / NCTC 12128 / CDC 0568-73).